The chain runs to 595 residues: ATPase family AAA domain-containing protein 3 (595 aa).

The segment at M1–D48 is disordered. Residues M1–K243 are Mitochondrial intermembrane-facing. Positions Q20–Q35 are enriched in low complexity. 2 coiled-coil regions span residues V80–V107 and E140–L175. Residues I244–T260 form a helical membrane-spanning segment. The Mitochondrial matrix segment spans residues A261–V595. G349–T356 serves as a coordination point for ATP. The PDZ-binding motif lies at E592–V595.

This sequence belongs to the AAA ATPase family.

It is found in the mitochondrion inner membrane. The protein localises to the mitochondrion matrix. It localises to the mitochondrion nucleoid. Functionally, essential for mitochondrial network organization, mitochondrial metabolism and cell growth at organism and cellular level. Important during development for the up-regulation of mitochondrial activity during the transition to higher larval stages. Regulates mitochondrial iron homeostasis. May play an important role in mitochondrial protein synthesis. May also participate in mitochondrial DNA replication. May bind to mitochondrial DNA D-loops and contribute to nucleoid stability. Plays a role in regulating the production of reactive oxygen species in response to heat stress. This is ATPase family AAA domain-containing protein 3 from Caenorhabditis elegans.